A 488-amino-acid chain; its full sequence is ATP synthase subunit beta (488 aa).

Gly-164 to Thr-171 serves as a coordination point for ATP.

Belongs to the ATPase alpha/beta chains family. F-type ATPases have 2 components, CF(1) - the catalytic core - and CF(0) - the membrane proton channel. CF(1) has five subunits: alpha(3), beta(3), gamma(1), delta(1), epsilon(1). CF(0) has four main subunits: a(1), b(1), b'(1) and c(9-12).

Its subcellular location is the cellular thylakoid membrane. It catalyses the reaction ATP + H2O + 4 H(+)(in) = ADP + phosphate + 5 H(+)(out). Functionally, produces ATP from ADP in the presence of a proton gradient across the membrane. The catalytic sites are hosted primarily by the beta subunits. The polypeptide is ATP synthase subunit beta (Prochlorococcus marinus (strain MIT 9313)).